Reading from the N-terminus, the 230-residue chain is uncharacterized protein (230 aa).

10 to 34 (VVTGASSGIGEAIAKKLSQQGASIV) contacts NADP(+). Substrate is bound at residue Ser-139. Tyr-152 acts as the Proton acceptor in catalysis.

The protein belongs to the short-chain dehydrogenases/reductases (SDR) family.

This is an uncharacterized protein from Staphylococcus epidermidis (strain ATCC 12228 / FDA PCI 1200).